Consider the following 364-residue polypeptide: Probable endopolygalacturonase B (364 aa).

The N-terminal stretch at 1–20 is a signal peptide; sequence MHFFQSSLVAATMGAALVAA. A propeptide spanning residues 21–29 is cleaved from the precursor; it reads APAADLETR. Cysteines 32 and 47 form a disulfide. Residues Asn138 and Asn141 are each glycosylated (N-linked (GlcNAc...) asparagine). 6 PbH1 repeats span residues 159-188, 189-210, 211-231, 240-261, 269-291, and 303-324; these read SDHL…DVGS, STYI…AVNS, GEHI…SIGS, VNDV…RIKT, VTGV…VVQQ, and TNGV…TSSA. Asp203 functions as the Proton donor in the catalytic mechanism. Cysteines 205 and 221 form a disulfide. His225 is a catalytic residue. A disulfide bridge connects residues Cys331 and Cys336. Asn338 carries an N-linked (GlcNAc...) asparagine glycan. A disulfide bridge links Cys355 with Cys364.

This sequence belongs to the glycosyl hydrolase 28 family.

Its subcellular location is the secreted. It catalyses the reaction (1,4-alpha-D-galacturonosyl)n+m + H2O = (1,4-alpha-D-galacturonosyl)n + (1,4-alpha-D-galacturonosyl)m.. Its function is as follows. Involved in maceration and soft-rotting of plant tissue. Hydrolyzes the 1,4-alpha glycosidic bonds of de-esterified pectate in the smooth region of the plant cell wall. The chain is Probable endopolygalacturonase B (pgaB) from Aspergillus fumigatus (strain ATCC MYA-4609 / CBS 101355 / FGSC A1100 / Af293) (Neosartorya fumigata).